Here is a 247-residue protein sequence, read N- to C-terminus: Carboxy-S-adenosyl-L-methionine synthase (247 aa).

S-adenosyl-L-methionine is bound by residues Tyr39, 64–66 (GCS), 89–90 (DN), 117–118 (DI), Asn132, and Arg199.

This sequence belongs to the class I-like SAM-binding methyltransferase superfamily. Cx-SAM synthase family. In terms of assembly, homodimer.

It carries out the reaction prephenate + S-adenosyl-L-methionine = carboxy-S-adenosyl-L-methionine + 3-phenylpyruvate + H2O. Functionally, catalyzes the conversion of S-adenosyl-L-methionine (SAM) to carboxy-S-adenosyl-L-methionine (Cx-SAM). The sequence is that of Carboxy-S-adenosyl-L-methionine synthase from Escherichia fergusonii (strain ATCC 35469 / DSM 13698 / CCUG 18766 / IAM 14443 / JCM 21226 / LMG 7866 / NBRC 102419 / NCTC 12128 / CDC 0568-73).